The following is a 188-amino-acid chain: Insulin-like growth factor 1 (188 aa).

A b region spans residues 45-73; it reads GPETLCGAELVDTLQFVCGERGFYFSKPT. 3 disulfides stabilise this stretch: Cys50-Cys92, Cys62-Cys105, and Cys91-Cys96. The segment at 74–85 is c; sequence GYGPSSRRSHNR. Positions 86 to 106 are a; that stretch reads GIVDECCFQSCELRRLEMYCA. A d region spans residues 107-114; that stretch reads PVKSGKAA. Positions 115 to 188 are cleaved as a propeptide — e peptide; it reads RSVRAQRHTD…GNTGGRNYRM (74 aa). Positions 115-188 are disordered; it reads RSVRAQRHTD…GNTGGRNYRM (74 aa). Positions 140-153 are enriched in basic and acidic residues; that stretch reads RGTERRTAQHPDKT.

It belongs to the insulin family. As to expression, all the isoforms are expressed in embryos, juvenile and adult liver, muscle and brain. At least one isoform is expressed in heart, kidney, testes, ovary, adipose tissue and spleen of juvenile salmon.

The protein resides in the secreted. In terms of biological role, the insulin-like growth factors, isolated from plasma, are structurally and functionally related to insulin but have a much higher growth-promoting activity. Acts as a ligand for IGF1R. Binds to the alpha subunit of IGF1R, leading to the activation of the intrinsic tyrosine kinase activity which autophosphorylates tyrosine residues in the beta subunit thus initiatiating a cascade of down-stream signaling events leading to activation of the PI3K-AKT/PKB and the Ras-MAPK pathways. Binds to integrins. Its binding to integrins and subsequent ternary complex formation with integrins and IGFR1 are essential for IGF1 signaling. In Oncorhynchus kisutch (Coho salmon), this protein is Insulin-like growth factor 1.